A 405-amino-acid chain; its full sequence is NADH-quinone oxidoreductase subunit D (405 aa).

This sequence belongs to the complex I 49 kDa subunit family. NDH-1 is composed of 14 different subunits. Subunits NuoB, C, D, E, F, and G constitute the peripheral sector of the complex.

It localises to the cell inner membrane. It catalyses the reaction a quinone + NADH + 5 H(+)(in) = a quinol + NAD(+) + 4 H(+)(out). Its function is as follows. NDH-1 shuttles electrons from NADH, via FMN and iron-sulfur (Fe-S) centers, to quinones in the respiratory chain. The immediate electron acceptor for the enzyme in this species is believed to be ubiquinone. Couples the redox reaction to proton translocation (for every two electrons transferred, four hydrogen ions are translocated across the cytoplasmic membrane), and thus conserves the redox energy in a proton gradient. The sequence is that of NADH-quinone oxidoreductase subunit D from Sphingopyxis alaskensis (strain DSM 13593 / LMG 18877 / RB2256) (Sphingomonas alaskensis).